A 381-amino-acid polypeptide reads, in one-letter code: Cytochrome b (381 aa).

4 helical membrane passes run 34 to 54, 78 to 99, 114 to 134, and 179 to 199; these read FGSL…FLAM, WLIR…YLHI, WNIG…GYVL, and FFAF…IHLL. Positions 84 and 98 each coordinate heme b. Heme b contacts are provided by H183 and H197. H202 lines the a ubiquinone pocket. The next 4 membrane-spanning stretches (helical) occupy residues 227–247, 289–309, 321–341, and 348–368; these read YKDL…ALFM, LGGV…PLLH, MTQI…WIGG, and FMMV…IIMP.

This sequence belongs to the cytochrome b family. The cytochrome bc1 complex contains 3 respiratory subunits (MT-CYB, CYC1 and UQCRFS1), 2 core proteins (UQCRC1 and UQCRC2) and probably 6 low-molecular weight proteins. The cofactor is heme b.

The protein localises to the mitochondrion inner membrane. Its function is as follows. Component of the ubiquinol-cytochrome c reductase complex (complex III or cytochrome b-c1 complex) that is part of the mitochondrial respiratory chain. The b-c1 complex mediates electron transfer from ubiquinol to cytochrome c. Contributes to the generation of a proton gradient across the mitochondrial membrane that is then used for ATP synthesis. This is Cytochrome b (mt-cyb) from Prionace glauca (Blue shark).